The following is a 198-amino-acid chain: NAD(P)H dehydrogenase (quinone) (198 aa).

In terms of domain architecture, Flavodoxin-like spans 4–190 (VLVLYYSAYG…EGAKYQGAHV (187 aa)). FMN contacts are provided by residues 10 to 15 (SAYGHI) and 78 to 80 (TRF). Y12 is a binding site for NAD(+). Residue W98 coordinates substrate. FMN is bound by residues 113–119 (SSATQHG) and H134.

It belongs to the WrbA family. FMN is required as a cofactor.

The catalysed reaction is a quinone + NADH + H(+) = a quinol + NAD(+). It catalyses the reaction a quinone + NADPH + H(+) = a quinol + NADP(+). In Rhizobium johnstonii (strain DSM 114642 / LMG 32736 / 3841) (Rhizobium leguminosarum bv. viciae), this protein is NAD(P)H dehydrogenase (quinone).